A 388-amino-acid chain; its full sequence is Alanine racemase 2 (388 aa).

Lysine 39 acts as the Proton acceptor; specific for D-alanine in catalysis. Position 39 is an N6-(pyridoxal phosphate)lysine (lysine 39). Arginine 137 lines the substrate pocket. Tyrosine 267 acts as the Proton acceptor; specific for L-alanine in catalysis. Methionine 315 contacts substrate.

This sequence belongs to the alanine racemase family. Pyridoxal 5'-phosphate is required as a cofactor.

The enzyme catalyses L-alanine = D-alanine. Its pathway is amino-acid biosynthesis; D-alanine biosynthesis; D-alanine from L-alanine: step 1/1. In terms of biological role, catalyzes the interconversion of L-alanine and D-alanine. May also act on other amino acids. The chain is Alanine racemase 2 (alr2) from Caldanaerobacter subterraneus subsp. tengcongensis (strain DSM 15242 / JCM 11007 / NBRC 100824 / MB4) (Thermoanaerobacter tengcongensis).